Here is a 477-residue protein sequence, read N- to C-terminus: Bifunctional enzyme PyrF/PyrE (477 aa).

The interval 1 to 273 is OMP decarboxylase; it reads MIFFDKLHQN…ITVRDVASCS (273 aa). Lys-96 acts as the Proton donor in catalysis. An orotate phosphoribosyltransferase region spans residues 274 to 477; it reads VWLPDVFTVK…DEQFLALTAE (204 aa). Residues Arg-374, Lys-375, Lys-378, His-380, and 400-408 each bind 5-phospho-alpha-D-ribose 1-diphosphate; that span reads DDILISGKS.

In the N-terminal section; belongs to the OMP decarboxylase family. Type 2 subfamily. The protein in the C-terminal section; belongs to the purine/pyrimidine phosphoribosyltransferase family. The cofactor is Mg(2+).

It carries out the reaction orotidine 5'-phosphate + H(+) = UMP + CO2. It catalyses the reaction orotidine 5'-phosphate + diphosphate = orotate + 5-phospho-alpha-D-ribose 1-diphosphate. It functions in the pathway pyrimidine metabolism; UMP biosynthesis via de novo pathway; UMP from orotate: step 1/2. Its pathway is pyrimidine metabolism; UMP biosynthesis via de novo pathway; UMP from orotate: step 2/2. Catalyzes the transfer of a ribosyl phosphate group from 5-phosphoribose 1-diphosphate to orotate, leading to the formation of orotidine monophosphate (OMP). Functionally, catalyzes the decarboxylation of orotidine monophosphate (OMP) to uridine monophosphate (UMP). The chain is Bifunctional enzyme PyrF/PyrE (pyrFE) from Nostoc sp. (strain PCC 7120 / SAG 25.82 / UTEX 2576).